Consider the following 308-residue polypeptide: Probable manganese-dependent inorganic pyrophosphatase (308 aa).

Mn(2+)-binding residues include His9, Asp13, Asp15, Asp75, His97, and Asp149.

The protein belongs to the PPase class C family. Requires Mn(2+) as cofactor.

The protein resides in the cytoplasm. The catalysed reaction is diphosphate + H2O = 2 phosphate + H(+). This Bacillus pumilus (strain SAFR-032) protein is Probable manganese-dependent inorganic pyrophosphatase.